Reading from the N-terminus, the 230-residue chain is Small ribosomal subunit protein uS7m (230 aa).

This sequence belongs to the universal ribosomal protein uS7 family. In terms of assembly, part of the small ribosomal subunit.

The protein localises to the mitochondrion. One of the primary rRNA binding proteins, it binds directly to 18S rRNA where it nucleates assembly of the head domain of the small subunit. In Marchantia polymorpha (Common liverwort), this protein is Small ribosomal subunit protein uS7m (RPS7).